We begin with the raw amino-acid sequence, 118 residues long: Iron-sulfur cluster insertion protein ErpA (118 aa).

3 residues coordinate iron-sulfur cluster: C46, C110, and C112.

The protein belongs to the HesB/IscA family. As to quaternary structure, homodimer. Iron-sulfur cluster serves as cofactor.

Functionally, required for insertion of 4Fe-4S clusters for at least IspG. The chain is Iron-sulfur cluster insertion protein ErpA from Psychromonas ingrahamii (strain DSM 17664 / CCUG 51855 / 37).